We begin with the raw amino-acid sequence, 2349 residues long: Reducing polyketide synthase hmp8 (2349 aa).

The Ketosynthase family 3 (KS3) domain occupies 9 to 435 (HVPVAIIGLA…GTNGHVVLEA (427 aa)). Residues C182, H317, and H357 each act as for beta-ketoacyl synthase activity in the active site. The tract at residues 551-856 (FVFTGQGAQW…SHNGIKNVAY (306 aa)) is malonyl-CoA:ACP transacylase (MAT) domain. Positions 930–1066 (RSLIGAPVPM…GLVAIDYEES (137 aa)) are N-terminal hotdog fold. A PKS/mFAS DH domain is found at 930–1250 (RSLIGAPVPM…TSELDMDSGK (321 aa)). The tract at residues 932–1244 (LIGAPVPMMA…SVKDFRTSEL (313 aa)) is dehydratase (DH) domain. Residue H962 is the Proton acceptor; for dehydratase activity of the active site. The C-terminal hotdog fold stretch occupies residues 1094 to 1250 (PEHYAHDKFY…TSELDMDSGK (157 aa)). The Proton donor; for dehydratase activity role is filled by D1160. Residues 1641–1953 (GLLDTLKFVP…QGKHRGKMVL (313 aa)) form an enoyl reductase (ER) domain region. The tract at residues 1977-2157 (ATYLFVGGLG…ISVNLGIMRD (181 aa)) is ketoreductase (KR) domain. Positions 2267–2344 (EAAEIITDAL…SFAVKIAEKS (78 aa)) constitute a Carrier domain. S2304 is subject to O-(pantetheine 4'-phosphoryl)serine.

It functions in the pathway secondary metabolite biosynthesis. Functionally, reducing polyketide synthase; part of the gene cluster that mediates the biosynthesis of hypothemycin, a resorcylic acid lactone (RAL) that irreversibly inhibits a subset of protein kinases with a conserved cysteine in the ATP binding site such as human ERK2. The first step is performed by both PKSs hmp3 and hmp8 and leads to the production of 7',8'-dehydrozearalenol (DHZ). The highly reducing PKS hpm8 synthesizes the reduced hexaketide (7S,11S,2E,8E)-7,11-dihydroxy-dodeca-2,8-dienoate, which is transferred downstream to the non-reducing PKS hpm3. Hpm3 then extends the reduced hexaketide to a nonaketide, after which regioselective cyclization and macrolactonization affords DHZ. The next step is the conversion of DHZ into aigialomycin C and is performed by the O-methyltransferase hmp5, the FAD-binding monooxygenase hmp7, and the cytochrome P450 monooxygenase hmp1. The wide substrate tolerance of the hmp5 and hmp7 implies that the reactions from DHZ to aigialomycin C can occur in any order. The steps from aigialomycin C to hypothemycin are less well established. The FAD-linked oxidoreductase hmp9 presumably catalyzes oxidation of the C-6' hydroxyl to a ketone. The timing of this oxidation is important, since the resulting enone functional group is a Michael acceptor that can react spontaneously with glutathione, an abundant metabolite in fungal cells. The glutathione S-transferase hmp2 catalyzes cis-trans isomerization of the 7',8' double bond with equilibrium favoring the trans isomer. The hpm6-encoded transporter might preferentially pump hypothemycin out of the cell relative to the trans isomer aigialomycin A. The cis-to-trans isomerization may be coupled with C-4' hydroxylation, since all known hypothemycin analogs containing the enone functional group also have hydroxyl groups at both C-4' and C-5'. The protein is Reducing polyketide synthase hmp8 of Hypomyces subiculosus (Nectria subiculosa).